The following is a 660-amino-acid chain: ATP-dependent zinc metalloprotease FtsH (660 aa).

The interval 1–20 (MMPSSQRPSPRGSRQSPSPD) is disordered. Residues 1–24 (MMPSSQRPSPRGSRQSPSPDQRGR) are Cytoplasmic-facing. The helical transmembrane segment at 25-45 (IAFAILATLVVAVLLLTLFSH) threads the bilayer. At 46-118 (APSGQPLGYS…VQVSYITPGP (73 aa)) the chain is on the extracellular side. The chain crosses the membrane as a helical span at residues 119–139 (GIASTIIEYVIFFGIFIGIWV). Over 140-660 (YLTRRTQGSV…ASHDDTDPVS (521 aa)) the chain is Cytoplasmic. Residue 213-220 (GPPGTGKT) coordinates ATP. Zn(2+) is bound at residue H435. Residue E436 is part of the active site. Positions 439 and 511 each coordinate Zn(2+).

In the central section; belongs to the AAA ATPase family. The protein in the C-terminal section; belongs to the peptidase M41 family. As to quaternary structure, homohexamer. It depends on Zn(2+) as a cofactor.

The protein localises to the cell membrane. Functionally, acts as a processive, ATP-dependent zinc metallopeptidase for both cytoplasmic and membrane proteins. Plays a role in the quality control of integral membrane proteins. The sequence is that of ATP-dependent zinc metalloprotease FtsH from Acidimicrobium ferrooxidans (strain DSM 10331 / JCM 15462 / NBRC 103882 / ICP).